The primary structure comprises 781 residues: Protein argonaute (781 aa).

Residues 110–194 enclose the PAZ domain; it reads SMNELLTERR…RHNDYCNSVM (85 aa). The Piwi domain occupies 436–760; the sequence is LVVIVIPGPK…LSKFCGEVLR (325 aa).

Belongs to the argonaute family. Ago subfamily. Interacts with miR2. Highly specific binding to the mRNA m7G-cap. May be a component of the RNA-induced silencing complex (RISC), a sequence-specific, multicomponent nuclease that destroys or silences messenger RNAs homologous to the silencing trigger.

Its subcellular location is the cytoplasm. Functionally, plays an essential role in growth and, with Dicer, also involved in microRNA (miRNA)-mediated translational repression. The RNA interference pathway is implicated in antigenic variation having a role in regulation of variant-specific surface protein (VSP)-coding gene expression. Several VSP genes are transcribed but only transcripts encoding the VSP to be expressed accumulate. Antisense RNAs corresponding to the silenced VSP genes are detected. This chain is Protein argonaute, found in Giardia intestinalis (Giardia lamblia).